Consider the following 107-residue polypeptide: Phosphoribosyl-ATP pyrophosphatase (107 aa).

This sequence belongs to the PRA-PH family.

It is found in the cytoplasm. It catalyses the reaction 1-(5-phospho-beta-D-ribosyl)-ATP + H2O = 1-(5-phospho-beta-D-ribosyl)-5'-AMP + diphosphate + H(+). The protein operates within amino-acid biosynthesis; L-histidine biosynthesis; L-histidine from 5-phospho-alpha-D-ribose 1-diphosphate: step 2/9. This chain is Phosphoribosyl-ATP pyrophosphatase, found in Nitrobacter hamburgensis (strain DSM 10229 / NCIMB 13809 / X14).